Reading from the N-terminus, the 114-residue chain is Small nuclear ribonucleoprotein SmD1a (114 aa).

Residues 2–74 (KLVRFLMKLN…IRYYILPDSL (73 aa)) form the Sm domain. The interval 87-114 (VKPKKPVAGKAVGRGRGRGRGRGRGRGR) is disordered. 8 tandem repeats follow at residues 99-100 (GR), 101-102 (GR), 103-104 (GR), 105-106 (GR), 107-108 (GR), 109-110 (GR), 111-112 (GR), and 113-114 (GR). The tract at residues 99–114 (GRGRGRGRGRGRGRGR) is 8 X 2 AA tandem repeats of G-R.

This sequence belongs to the snRNP core protein family.

The protein localises to the nucleus. It localises to the nucleus speckle. Its subcellular location is the nucleolus. Involved in splicing regulation. Facilitates post-transcriptional gene silencing (PTGS) by limiting the degradation of transgene aberrant RNAs by the RNA quality control (RQC) machinery, thus favoring their entry into cytoplasmic siRNA bodies where they can trigger PTGS. Does not participate in the production of small RNAs. This Arabidopsis thaliana (Mouse-ear cress) protein is Small nuclear ribonucleoprotein SmD1a.